A 334-amino-acid polypeptide reads, in one-letter code: Serine racemase (334 aa).

Glu-13 contacts Mg(2+). ATP-binding residues include Ser-31, Ser-32, Ile-33, Lys-51, and Thr-52. Residues Lys-56 and Ser-84 each act as proton acceptor in the active site. An N6-(pyridoxal phosphate)lysine modification is found at Lys-56. Asn-86 contacts pyridoxal 5'-phosphate. Gln-89 is an ATP binding site. Cys-113 carries the S-nitrosocysteine modification. Position 121 (Tyr-121) interacts with ATP. Asn-154 lines the pyridoxal 5'-phosphate pocket. Asp-178 is a Mg(2+) binding site. 5 residues coordinate pyridoxal 5'-phosphate: Gly-185, Gly-186, Gly-187, Gly-188, and Met-189. Residues Glu-210, Ala-214, Asp-216, and Asn-247 each contribute to the Mg(2+) site. Glu-210, Ala-214, Asp-216, and Asn-247 together coordinate Ca(2+). Mn(2+) contacts are provided by Glu-210, Ala-214, and Asp-216. An ATP-binding site is contributed by Lys-279. Ser-313 is a pyridoxal 5'-phosphate binding site. Asn-316 provides a ligand contact to ATP.

The protein belongs to the serine/threonine dehydratase family. As to quaternary structure, homodimer. Mg(2+) is required as a cofactor. It depends on Mn(2+) as a cofactor. Ca(2+) serves as cofactor. Requires pyridoxal 5'-phosphate as cofactor. S-nitrosylated, leading to decrease the enzyme activity.

The catalysed reaction is L-serine = D-serine. It catalyses the reaction L-serine = pyruvate + NH4(+). The enzyme catalyses D-serine = pyruvate + NH4(+). Functionally, catalyzes the synthesis of D-serine from L-serine. D-serine is a key coagonist with glutamate at NMDA receptors. Has dehydratase activity towards both L-serine and D-serine. The sequence is that of Serine racemase (SRR) from Bos taurus (Bovine).